The following is a 103-amino-acid chain: Protein Rev (103 aa).

S5 carries the post-translational modification Phosphoserine; by host CK2. Residues 18-26 are homomultimerization; sequence VIKILYQSN. Positions 25–34 are enriched in polar residues; it reads SNPYPNDSGT. 2 disordered regions span residues 25–48 and 66–103; these read SNPY…WRAR and GLQE…TATT. Positions 34–50 match the Nuclear localization signal and RNA-binding (RRE) motif; sequence TRQARKNRRRRWRARQR. Residues 36–48 show a composition bias toward basic residues; that stretch reads QARKNRRRRWRAR. The short motif at 73 to 84 is the Nuclear export signal and binding to XPO1 element; sequence LPLPPLDRLSLN. S92 bears the Phosphoserine; by host mark.

Belongs to the HIV-1 REV protein family. Homomultimer; when bound to the RRE. Multimeric assembly is essential for activity and may involve XPO1. Binds to human KPNB1, XPO1, TNPO1, RANBP5 and IPO7. Interacts with the viral Integrase. Interacts with human KHDRBS1. Interacts with human NAP1; this interaction decreases Rev multimerization and stimulates its activity. Interacts with human DEAD-box helicases DDX3 and DDX24; these interactions may serve for viral RNA export to the cytoplasm and packaging, respectively. Interacts with human PSIP1; this interaction may inhibit HIV-1 DNA integration by promoting dissociation of the Integrase-LEDGF/p75 complex. Post-translationally, asymmetrically arginine dimethylated at one site by host PRMT6. Methylation impairs the RNA-binding activity and export of viral RNA from the nucleus to the cytoplasm. Phosphorylated by protein kinase CK2. Presence of, and maybe binding to the N-terminus of the regulatory beta subunit of CK2 is necessary for CK2-mediated Rev's phosphorylation.

The protein resides in the host nucleus. It is found in the host nucleolus. The protein localises to the host cytoplasm. Escorts unspliced or incompletely spliced viral pre-mRNAs (late transcripts) out of the nucleus of infected cells. These pre-mRNAs carry a recognition sequence called Rev responsive element (RRE) located in the env gene, that is not present in fully spliced viral mRNAs (early transcripts). This function is essential since most viral proteins are translated from unspliced or partially spliced pre-mRNAs which cannot exit the nucleus by the pathway used by fully processed cellular mRNAs. Rev itself is translated from a fully spliced mRNA that readily exits the nucleus. Rev's nuclear localization signal (NLS) binds directly to KPNB1/Importin beta-1 without previous binding to KPNA1/Importin alpha-1. KPNB1 binds to the GDP bound form of RAN (Ran-GDP) and targets Rev to the nucleus. In the nucleus, the conversion from Ran-GDP to Ran-GTP dissociates Rev from KPNB1 and allows Rev's binding to the RRE in viral pre-mRNAs. Rev multimerization on the RRE via cooperative assembly exposes its nuclear export signal (NES) to the surface. Rev can then form a complex with XPO1/CRM1 and Ran-GTP, leading to nuclear export of the complex. Conversion from Ran-GTP to Ran-GDP mediates dissociation of the Rev/RRE/XPO1/RAN complex, so that Rev can return to the nucleus for a subsequent round of export. Beside KPNB1, also seems to interact with TNPO1/Transportin-1, RANBP5/IPO5 and IPO7/RANBP7 for nuclear import. The nucleoporin-like HRB/RIP is an essential cofactor that probably indirectly interacts with Rev to release HIV RNAs from the perinuclear region to the cytoplasm. The polypeptide is Protein Rev (Pan troglodytes (Chimpanzee)).